We begin with the raw amino-acid sequence, 306 residues long: Tryptophan 2,3-dioxygenase (306 aa).

The segment at 1–33 is disordered; that stretch reads MQPPGDDAAPRCPFAGAHAPDAPHVPEAAGDDA. Residues 75–79, Tyr137, and Arg141 each bind substrate; that span reads FIIQH. A heme-binding site is contributed by His264. Position 278 (Thr278) interacts with substrate.

The protein belongs to the tryptophan 2,3-dioxygenase family. In terms of assembly, homotetramer. It depends on heme as a cofactor.

It carries out the reaction L-tryptophan + O2 = N-formyl-L-kynurenine. Its pathway is amino-acid degradation; L-tryptophan degradation via kynurenine pathway; L-kynurenine from L-tryptophan: step 1/2. Its function is as follows. Heme-dependent dioxygenase that catalyzes the oxidative cleavage of the L-tryptophan (L-Trp) pyrrole ring and converts L-tryptophan to N-formyl-L-kynurenine. Catalyzes the oxidative cleavage of the indole moiety. This Burkholderia pseudomallei (strain 668) protein is Tryptophan 2,3-dioxygenase.